The sequence spans 243 residues: MAAAAGPSSSVKESLPPALGSTSQPPPVFDGTTRLYICYFCPFAQRAWVTRNLKGLQDKMELVAIDLQDKPAWYKDKVYAQGTVPSLEHDSEVRGESLDLIRYIDSNFDGPALLPEDAAKRQFADELFASANAFTKALYSPLLSHAAVSDEVVAALDKLEADLSKFDDGPFFLGQFSLADVAYVTILERVQIYYSHLRNYDIAQGRPNLQEFIDEMNKIEAYAQTKNDPLFLLDLAKSHLKIA.

The tract at residues 1 to 26 (MAAAAGPSSSVKESLPPALGSTSQPP) is disordered. The 82-residue stretch at 31–112 (GTTRLYICYF…YIDSNFDGPA (82 aa)) folds into the GST N-terminal domain. Residues lysine 70, valine 84, and 96–97 (ES) contribute to the glutathione site. Residues 109-240 (DGPALLPEDA…FLLDLAKSHL (132 aa)) enclose the GST C-terminal domain.

This sequence belongs to the GST superfamily. HSP26 family. As to expression, leaves and roots. It is more strongly induced in the leaves relative to the roots.

The polypeptide is Protein IN2-1 (IN2-1) (Zea mays (Maize)).